We begin with the raw amino-acid sequence, 197 residues long: Segregation and condensation protein B (197 aa).

It belongs to the ScpB family. As to quaternary structure, homodimer. Homodimerization may be required to stabilize the binding of ScpA to the Smc head domains. Component of a cohesin-like complex composed of ScpA, ScpB and the Smc homodimer, in which ScpA and ScpB bind to the head domain of Smc. The presence of the three proteins is required for the association of the complex with DNA.

The protein localises to the cytoplasm. Participates in chromosomal partition during cell division. May act via the formation of a condensin-like complex containing Smc and ScpA that pull DNA away from mid-cell into both cell halves. This is Segregation and condensation protein B from Halalkalibacterium halodurans (strain ATCC BAA-125 / DSM 18197 / FERM 7344 / JCM 9153 / C-125) (Bacillus halodurans).